Consider the following 156-residue polypeptide: Ribosome maturation factor RimP (156 aa).

The protein belongs to the RimP family.

It is found in the cytoplasm. In terms of biological role, required for maturation of 30S ribosomal subunits. This is Ribosome maturation factor RimP from Shouchella clausii (strain KSM-K16) (Alkalihalobacillus clausii).